The primary structure comprises 145 residues: D-aminoacyl-tRNA deacylase (145 aa).

The short motif at 137-138 (GP) is the Gly-cisPro motif, important for rejection of L-amino acids element.

Belongs to the DTD family. In terms of assembly, homodimer.

The protein localises to the cytoplasm. The catalysed reaction is glycyl-tRNA(Ala) + H2O = tRNA(Ala) + glycine + H(+). It catalyses the reaction a D-aminoacyl-tRNA + H2O = a tRNA + a D-alpha-amino acid + H(+). Functionally, an aminoacyl-tRNA editing enzyme that deacylates mischarged D-aminoacyl-tRNAs. Also deacylates mischarged glycyl-tRNA(Ala), protecting cells against glycine mischarging by AlaRS. Acts via tRNA-based rather than protein-based catalysis; rejects L-amino acids rather than detecting D-amino acids in the active site. By recycling D-aminoacyl-tRNA to D-amino acids and free tRNA molecules, this enzyme counteracts the toxicity associated with the formation of D-aminoacyl-tRNA entities in vivo and helps enforce protein L-homochirality. The chain is D-aminoacyl-tRNA deacylase from Shewanella baltica (strain OS223).